Reading from the N-terminus, the 426-residue chain is 3-phosphoshikimate 1-carboxyvinyltransferase (426 aa).

3-phosphoshikimate-binding residues include lysine 22, serine 23, and arginine 27. Lysine 22 contributes to the phosphoenolpyruvate binding site. Phosphoenolpyruvate contacts are provided by glycine 96 and arginine 124. The 3-phosphoshikimate site is built by serine 170, serine 171, glutamine 172, serine 198, aspartate 314, asparagine 337, and lysine 341. Position 172 (glutamine 172) interacts with phosphoenolpyruvate. Catalysis depends on aspartate 314, which acts as the Proton acceptor. 3 residues coordinate phosphoenolpyruvate: arginine 345, arginine 387, and lysine 412.

The protein belongs to the EPSP synthase family. Monomer.

It localises to the cytoplasm. It carries out the reaction 3-phosphoshikimate + phosphoenolpyruvate = 5-O-(1-carboxyvinyl)-3-phosphoshikimate + phosphate. Its pathway is metabolic intermediate biosynthesis; chorismate biosynthesis; chorismate from D-erythrose 4-phosphate and phosphoenolpyruvate: step 6/7. Functionally, catalyzes the transfer of the enolpyruvyl moiety of phosphoenolpyruvate (PEP) to the 5-hydroxyl of shikimate-3-phosphate (S3P) to produce enolpyruvyl shikimate-3-phosphate and inorganic phosphate. The polypeptide is 3-phosphoshikimate 1-carboxyvinyltransferase (Colwellia psychrerythraea (strain 34H / ATCC BAA-681) (Vibrio psychroerythus)).